A 312-amino-acid polypeptide reads, in one-letter code: Phospho-N-acetylmuramoyl-pentapeptide-transferase (312 aa).

Helical transmembrane passes span 1 to 21, 48 to 68, 76 to 96, 115 to 135, 140 to 160, 165 to 185, 214 to 234, 238 to 258, and 289 to 309; these read MMVV…HYSK, GVAF…FGGI, EVMI…DDFL, FPLQ…LASH, GFMS…FVMV, AFNF…IVLL, VFMG…AYAL, VWLL…VVIQ, and VTLR…WLMG.

The protein belongs to the glycosyltransferase 4 family. MraY subfamily. Mg(2+) serves as cofactor.

The protein localises to the cell membrane. It carries out the reaction UDP-N-acetyl-alpha-D-muramoyl-L-alanyl-gamma-D-glutamyl-meso-2,6-diaminopimeloyl-D-alanyl-D-alanine + di-trans,octa-cis-undecaprenyl phosphate = di-trans,octa-cis-undecaprenyl diphospho-N-acetyl-alpha-D-muramoyl-L-alanyl-D-glutamyl-meso-2,6-diaminopimeloyl-D-alanyl-D-alanine + UMP. It functions in the pathway cell wall biogenesis; peptidoglycan biosynthesis. Catalyzes the initial step of the lipid cycle reactions in the biosynthesis of the cell wall peptidoglycan: transfers peptidoglycan precursor phospho-MurNAc-pentapeptide from UDP-MurNAc-pentapeptide onto the lipid carrier undecaprenyl phosphate, yielding undecaprenyl-pyrophosphoryl-MurNAc-pentapeptide, known as lipid I. The protein is Phospho-N-acetylmuramoyl-pentapeptide-transferase of Deinococcus radiodurans (strain ATCC 13939 / DSM 20539 / JCM 16871 / CCUG 27074 / LMG 4051 / NBRC 15346 / NCIMB 9279 / VKM B-1422 / R1).